Here is a 122-residue protein sequence, read N- to C-terminus: MIQTQTYLNVADNSGARELMCIRILGASNRRYANIGDIIVAVIKEAVPNMPLERSEVIRAVIVRTCKELKRDNGMIIRYDDNAAVVIDQEGNPKGTRVFGAIARELRQLNFTKIVSLAPEVL.

The protein belongs to the universal ribosomal protein uL14 family. As to quaternary structure, part of the 50S ribosomal subunit.

It localises to the plastid. Its subcellular location is the chloroplast. Its function is as follows. Binds to 23S rRNA. The chain is Large ribosomal subunit protein uL14c from Piper cenocladum (Ant piper).